Consider the following 496-residue polypeptide: Probable cytosol aminopeptidase (496 aa).

Mn(2+) contacts are provided by lysine 261 and aspartate 266. Lysine 273 is a catalytic residue. Mn(2+) contacts are provided by aspartate 284, aspartate 343, and glutamate 345. Residue arginine 347 is part of the active site.

It belongs to the peptidase M17 family. Mn(2+) serves as cofactor.

The protein localises to the cytoplasm. The enzyme catalyses Release of an N-terminal amino acid, Xaa-|-Yaa-, in which Xaa is preferably Leu, but may be other amino acids including Pro although not Arg or Lys, and Yaa may be Pro. Amino acid amides and methyl esters are also readily hydrolyzed, but rates on arylamides are exceedingly low.. The catalysed reaction is Release of an N-terminal amino acid, preferentially leucine, but not glutamic or aspartic acids.. Its function is as follows. Presumably involved in the processing and regular turnover of intracellular proteins. Catalyzes the removal of unsubstituted N-terminal amino acids from various peptides. The chain is Probable cytosol aminopeptidase from Bacillus licheniformis (strain ATCC 14580 / DSM 13 / JCM 2505 / CCUG 7422 / NBRC 12200 / NCIMB 9375 / NCTC 10341 / NRRL NRS-1264 / Gibson 46).